A 182-amino-acid chain; its full sequence is Early nodulin-like protein 14 (182 aa).

Residues 1–28 (MFLSASMASSSLHVAIFSLIFLFSLAAA) form the signal peptide. The 105-residue stretch at 29–133 (NEVTVGGKSG…GQKLSLVVIS (105 aa)) folds into the Phytocyanin domain. The cysteines at positions 87 and 121 are disulfide-linked. N-linked (GlcNAc...) asparagine glycosylation is found at Asn88 and Asn95. Ser160 carries the GPI-anchor amidated serine lipid modification. Positions 161 to 182 (GSVRLGGCYVVLGLVLGLCAWF) are cleaved as a propeptide — removed in mature form.

This sequence belongs to the early nodulin-like (ENODL) family. Interacts strongly and specifically with the extracellular domain of FERONIA at the synergid cell surface. Mostly expressed in seedlings and flowers, and, to a lower extent, in roots, stems and seeds, but barely in leaves.

It localises to the cell membrane. In terms of biological role, may act as a carbohydrate transporter. Required, together with ENODL11, ENODL12, ENODL13, ENODL14 and ENODL15, for male-female communication and pollen tube reception and burst at the synergid cell surface of the female gametophyte. The protein is Early nodulin-like protein 14 of Arabidopsis thaliana (Mouse-ear cress).